Consider the following 170-residue polypeptide: Adenine phosphoribosyltransferase (170 aa).

This sequence belongs to the purine/pyrimidine phosphoribosyltransferase family. Homodimer.

The protein localises to the cytoplasm. It carries out the reaction AMP + diphosphate = 5-phospho-alpha-D-ribose 1-diphosphate + adenine. Its pathway is purine metabolism; AMP biosynthesis via salvage pathway; AMP from adenine: step 1/1. Functionally, catalyzes a salvage reaction resulting in the formation of AMP, that is energically less costly than de novo synthesis. The chain is Adenine phosphoribosyltransferase from Mycoplasmopsis pulmonis (strain UAB CTIP) (Mycoplasma pulmonis).